The following is a 73-amino-acid chain: Disintegrin lachesin (73 aa).

Residues 1–73 enclose the Disintegrin domain; that stretch reads EAGEECDCGA…ADCPRNGYYG (73 aa). Cystine bridges form between Cys-6–Cys-21, Cys-8–Cys-16, Cys-15–Cys-38, Cys-29–Cys-35, Cys-34–Cys-59, and Cys-47–Cys-66. The Cell attachment site signature appears at 51-53; that stretch reads RGD. Positions 51–73 are disordered; that stretch reads RGDNPDDRCTGQSADCPRNGYYG.

Belongs to the venom metalloproteinase (M12B) family. P-II subfamily. P-IIa sub-subfamily. In terms of assembly, monomer (disintegrin). In terms of tissue distribution, expressed by the venom gland.

Its subcellular location is the secreted. Inhibits fibrinogen interaction with platelets. Acts by binding to alpha-IIb/beta-3 (ITGA2B/ITGB3) on the platelet surface and inhibits aggregation induced by ADP, thrombin, platelet-activating factor and collagen. The chain is Disintegrin lachesin from Lachesis muta muta (Bushmaster).